The following is a 70-amino-acid chain: Small ribosomal subunit protein bS21 (70 aa).

Belongs to the bacterial ribosomal protein bS21 family.

The polypeptide is Small ribosomal subunit protein bS21 (Nitrosospira multiformis (strain ATCC 25196 / NCIMB 11849 / C 71)).